We begin with the raw amino-acid sequence, 133 residues long: UPF0344 protein SH1980 (133 aa).

A run of 4 helical transmembrane segments spans residues 1-21 (MLHMHIASWALTIILYVIAFL), 42-62 (VFMLLTLFSGFWLLIQEFMAA), 71-91 (MLLTLKMLCGIAVVALMEVSI), and 103-123 (LFWATIILIIITMSLGIILPW).

Belongs to the UPF0344 family.

It localises to the cell membrane. The sequence is that of UPF0344 protein SH1980 from Staphylococcus haemolyticus (strain JCSC1435).